Here is a 642-residue protein sequence, read N- to C-terminus: Chaperone protein DnaK (642 aa).

At Thr-198 the chain carries Phosphothreonine; by autocatalysis. Residues 578 to 589 (DDKEAIESRMQK) show a composition bias toward basic and acidic residues. The disordered stretch occupies residues 578–642 (DDKEAIESRM…FEEVKDGDKK (65 aa)). A compositionally biased stretch (low complexity) spans 603–619 (AEQAAQQGGDAGAQAED).

Belongs to the heat shock protein 70 family.

Its function is as follows. Acts as a chaperone. This chain is Chaperone protein DnaK, found in Hahella chejuensis (strain KCTC 2396).